The primary structure comprises 2173 residues: Mediator of DNA damage checkpoint protein 1 (2173 aa).

Residues 1 to 19 (MEDTQAIDWDVEEEEETEQ) are compositionally biased toward acidic residues. Residues 1–22 (MEDTQAIDWDVEEEEETEQSSE) form a disordered region. The tract at residues 1 to 150 (MEDTQAIDWD…SRGPLTVEET (150 aa)) is interaction with CHEK2. Residues 2 to 222 (EDTQAIDWDV…PFAFNLNSDT (221 aa)) form an interaction with the MRN complex region. Thr4 carries the post-translational modification Phosphothreonine. The FHA domain maps to 54 to 105 (NVVGRMPDCSVALPFPSISKQHAEIEILAWDKAPILRDCGSLNGTQILRPPK). Ser108 carries the phosphoserine modification. A required for nuclear localization (NLS1) region spans residues 145 to 570 (LTVEETPRVQ…PAKLLVVSLE (426 aa)). Thr146 carries the post-translational modification Phosphothreonine. A phosphoserine mark is found at Ser168, Ser176, Ser198, and Ser220. Residues 198–320 (SDEEGHSPVL…PPGRPAEVHL (123 aa)) are disordered. Position 222 is a phosphothreonine (Thr222). Low complexity predominate over residues 227–244 (GQQSATEEASSAARRGAT). The span at 259-276 (QLEKDQPSVKERDNDTKV) shows a compositional bias: basic and acidic residues. A Phosphoserine modification is found at Ser301. Position 303 is a phosphothreonine (Thr303). Residues 308-320 (DSRPPGRPAEVHL) show a composition bias toward basic and acidic residues. Phosphoserine is present on Ser331. Thr333 carries the phosphothreonine modification. Positions 359-383 (GTRGPGAPGLSHLQESQAGSDTDVE) are disordered. Phosphoserine occurs at positions 374 and 378. Thr380 bears the Phosphothreonine mark. Ser396, Ser399, and Ser404 each carry phosphoserine. At Thr406 the chain carries Phosphothreonine. At Ser413 the chain carries Phosphoserine. The segment at 444-515 (LQRSQTTTGR…SSPGIHLERS (72 aa)) is disordered. Thr451 carries the post-translational modification Phosphothreonine. At Ser455 the chain carries Phosphoserine. Thr457 carries the phosphothreonine modification. Ser487, Ser497, Ser500, Ser506, Ser507, and Ser515 each carry phosphoserine. A Phosphothreonine modification is found at Thr525. Position 592 is a phosphoserine (Ser592). A Glycyl lysine isopeptide (Lys-Gly) (interchain with G-Cter in SUMO1); alternate cross-link involves residue Lys618. Lys618 participates in a covalent cross-link: Glycyl lysine isopeptide (Lys-Gly) (interchain with G-Cter in SUMO2); alternate. Ser631 carries the phosphoserine modification. 2 disordered regions span residues 652 to 697 (VDTD…EDPD) and 773 to 1770 (HLEA…TLRS). Over residues 673–687 (GREREQHVGRTKDSE) the composition is skewed to basic and acidic residues. Over residues 688–697 (DNCDDSEDPD) the composition is skewed to acidic residues. Phosphoserine occurs at positions 782 and 795. Residue Lys814 is modified to N6-acetyllysine. 4 stretches are compositionally biased toward basic and acidic residues: residues 821 to 846 (ETAE…ERQT), 853 to 864 (ELTRGIQDREQK), 870 to 903 (DTQR…KEIQ), and 916 to 953 (AFER…RGEP). Ser957, Ser1000, Ser1035, Ser1070, and Ser1088 each carry phosphoserine. A compositionally biased stretch (polar residues) spans 957-969 (SQDQKGQASSPTS). The span at 1079 to 1090 (TIRKTGQDRSQE) shows a compositional bias: basic and acidic residues. Over residues 1105–1115 (PKPKIITRKSS) the composition is skewed to basic residues. Polar residues predominate over residues 1131–1156 (PSTSTAQPVTPKPTSQATRSRTNRSS). The interaction with the PRKDC complex stretch occupies residues 1150-1694 (SRTNRSSVKT…KNRSSVKTPE (545 aa)). Over residues 1157–1169 (VKTPEPVVPTVPE) the composition is skewed to low complexity. Residue Thr1159 is modified to Phosphothreonine. A compositionally biased stretch (polar residues) spans 1171–1189 (QPSTSTDQPVASEPTSQAT). A Phosphothreonine modification is found at Thr1200. The residue at position 1237 (Ser1237) is a Phosphoserine. Phosphothreonine occurs at positions 1241, 1282, and 1304. The segment covering 1280 to 1292 (VKTPEPVVPTVPE) has biased composition (low complexity). The span at 1294–1320 (QPSTSTDQPVTSEPTSQATRGRTNRSS) shows a compositional bias: polar residues. Low complexity predominate over residues 1321 to 1333 (VKTPEPVVPTVPE). Over residues 1335–1353 (QPSTSTDQPVASEPTSQAT) the composition is skewed to polar residues. Low complexity predominate over residues 1390–1402 (TSRTTRSRTNMSS). Polar residues-rich tracts occupy residues 1418–1434 (PSTS…TYQP), 1456–1487 (KLQS…SVKS), 1499–1527 (QPST…SSVK), and 1540–1559 (QPST…QATR). 2 positions are modified to phosphoserine: Ser1483 and Ser1484. Lys1486 carries the post-translational modification N6-acetyllysine. Phosphothreonine occurs at positions 1509 and 1550. Over residues 1567–1578 (VKTPKIVVPTVP) the composition is skewed to low complexity. Over residues 1581–1598 (QASTSTDQPVTSEPTSRT) the composition is skewed to polar residues. Residues Thr1617 and Thr1632 each carry the phosphothreonine modification. Residues 1626–1639 (STDQPITPKPTSRA) are compositionally biased toward polar residues. Ser1648 carries the post-translational modification Phosphoserine. Residues Thr1651 and Thr1673 each carry the phosphothreonine modification. Polar residues predominate over residues 1664–1680 (PSTSRSQLVTPEPTSRA). At Ser1688 the chain carries Phosphoserine. 4 positions are modified to phosphothreonine: Thr1692, Thr1714, Thr1748, and Thr1755. A compositionally biased stretch (polar residues) spans 1705-1721 (PTTSTDQPVTPKPTSRA). The segment covering 1761-1770 (QGSQSKTLRS) has biased composition (polar residues). The residue at position 1765 (Ser1765) is a Phosphoserine. Residue Thr1781 is modified to Phosphothreonine. The required for nuclear localization (NLS2) stretch occupies residues 1782–2173 (PEFQSPVTTD…VLSPLEMSST (392 aa)). Phosphoserine occurs at positions 1786 and 1795. Residues 1809–1971 (RATGNPGSLT…NRSLRRTKLN (163 aa)) are disordered. A Glycyl lysine isopeptide (Lys-Gly) (interchain with G-Cter in SUMO2) cross-link involves residue Lys1824. Ser1859 is subject to Phosphoserine. Lys1874 participates in a covalent cross-link: Glycyl lysine isopeptide (Lys-Gly) (interchain with G-Cter in SUMO2). Thr1884 is modified (phosphothreonine). A Phosphoserine modification is found at Ser1904. Polar residues predominate over residues 1907–1920 (HQKQPQRGEVSQKT). A Glycyl lysine isopeptide (Lys-Gly) (interchain with G-Cter in SUMO1); alternate cross-link involves residue Lys1924. Lys1924 participates in a covalent cross-link: Glycyl lysine isopeptide (Lys-Gly) (interchain with G-Cter in SUMO2); alternate. The segment covering 1931 to 1941 (AEKPGKEEDVM) has biased composition (basic and acidic residues). Thr1942 bears the Phosphothreonine mark. BRCT domains are found at residues 1976-2054 (APKV…EYVV) and 2075-2166 (RERR…FVLS). Arg2027 carries the post-translational modification Omega-N-methylarginine.

Homodimer. Interacts with H2AX, which requires phosphorylation of H2AX on 'Ser-139'. Interacts with the MRN complex, composed of MRE11, RAD50, and NBN. Interacts with CHEK2, which requires ATM-mediated phosphorylation of 'Thr-68' within the FHA domain of CHEK2. Interacts constitutively with the BRCA1-BARD1 complex, SMC1A and TP53BP1. Interacts with ATM and FANCD2, and these interactions are reduced upon DNA damage. Also interacts with the PRKDC complex, composed of XRCC6/KU70, XRCC5/KU80 and PRKDC/XRCC7. This interaction may be required for PRKDC autophosphorylation, which is essential for DNA double strand break (DSB) repair. When phosphorylated by ATM, interacts with RNF8 (via FHA domain). Interacts with CEP164. When phosphorylated, interacts with APTX (via FHA-like domain). Interacts (when phosphorylated) with TOPBP1; promoting TOPBP1 localization to DNA damage sites during mitosis. Interacts (when phosphorylated) with NBN; promoting NBN and MRN complex localization to DNA damage sites. In terms of processing, phosphorylated upon exposure to ionizing radiation (IR), ultraviolet radiation (UV), and hydroxyurea (HU). Phosphorylation in response to IR requires ATM, NBN, and possibly CHEK2. Also phosphorylated during the G2/M phase of the cell cycle and during activation of the mitotic spindle checkpoint. Phosphorylation at Thr-4 by ATM stabilizes and enhances homodimerization via the FHA domain. Phosphorylated at Ser-168 and Ser-198 by CK2 in response to DNA damage during mitosis, promoting interaction with TOPBP1. Phosphorylated by CK2 in response to DNA damage, promoting interaction with NBN and recruitment of the MRN complex to DNA damage sites. Sumoylation at Lys-1924 by PIAS4 following DNA damage promotes ubiquitin-mediated degradation. Post-translationally, ubiquitinated by RNF4, leading to proteasomal degradation; undergoes 'Lys-48'-linked polyubiquitination.

It localises to the nucleus. The protein localises to the chromosome. Its function is as follows. Histone reader protein required for checkpoint-mediated cell cycle arrest in response to DNA damage within both the S phase and G2/M phases of the cell cycle. Specifically recognizes and binds histone H2AX phosphorylated at 'Ser-139', a marker of DNA damage, serving as a scaffold for the recruitment of DNA repair and signal transduction proteins to discrete foci of DNA damage sites. Also required for downstream events subsequent to the recruitment of these proteins. These include phosphorylation and activation of the ATM, CHEK1 and CHEK2 kinases, and stabilization of TP53/p53 and apoptosis. ATM and CHEK2 may also be activated independently by a parallel pathway mediated by TP53BP1. Required for chromosomal stability during mitosis by promoting recruitment of TOPBP1 to DNA double strand breaks (DSBs): TOPBP1 forms filamentous assemblies that bridge MDC1 and tether broken chromosomes during mitosis. Required for the repair of DSBs via homologous recombination by promoting recruitment of NBN component of the MRN complex to DSBs. The chain is Mediator of DNA damage checkpoint protein 1 (MDC1) from Macaca mulatta (Rhesus macaque).